The following is an 809-amino-acid chain: Ferric-pyoverdine BN7/BN8 receptor (809 aa).

Positions 1-45 are cleaved as a signal peptide; the sequence is MNHTARKRQGWQRSVSQKLAGAVVQGIACMGASAPLLLMPAWATA. Residues 166–273 enclose the TBDR plug domain; sequence TPRETPQSLT…PSATINLIRK (108 aa). The TBDR beta-barrel domain maps to 278–809; the sequence is EAQASITGEA…NVMTSFKYSF (532 aa). The TonB C-terminal box motif lies at 792 to 809; it reads YGVYGTPRNVMTSFKYSF.

It belongs to the TonB-dependent receptor family.

It is found in the cell outer membrane. In terms of biological role, specific receptor for the siderophores ferric pyoverdines (pseudobactins) BN8 and BN7, iron chelating molecules that allow the organism to extract iron from the environment, especially under iron-restricted conditions. The protein is Ferric-pyoverdine BN7/BN8 receptor (pupB) of Pseudomonas putida (Arthrobacter siderocapsulatus).